The chain runs to 180 residues: Sperm protein associated with the nucleus on the X chromosome N2 (180 aa).

Disordered regions lie at residues 1-46 (MEQP…KTKT) and 64-180 (NSNQ…GGED). Residues 10–26 (GEKRKSPCESNNKKNDE) are compositionally biased toward basic and acidic residues. Residues 82 to 169 (QEEEDEGLDS…SSQEDEDLDS (88 aa)) show a composition bias toward acidic residues. Residues 170–180 (SEGSSQEGGED) are compositionally biased toward low complexity.

This sequence belongs to the SPAN-X family.

The polypeptide is Sperm protein associated with the nucleus on the X chromosome N2 (SPANXN2) (Homo sapiens (Human)).